The chain runs to 306 residues: D-alanine--D-alanine ligase (306 aa).

Catalysis depends on residues glutamate 15 and serine 150. Positions 101–303 (KLLWKSLSLR…FDELILKILK (203 aa)) constitute an ATP-grasp domain. Position 134–189 (134–189 (ILKLKFPVVIKPNNAGSSIGITIVNHPDLLIDSINLAFNYSNNIIIEKFLKGTEYT)) interacts with ATP. The Mg(2+) site is built by aspartate 257, glutamate 270, and asparagine 272. Serine 281 is a catalytic residue.

It belongs to the D-alanine--D-alanine ligase family. It depends on Mg(2+) as a cofactor. Requires Mn(2+) as cofactor.

The protein localises to the cytoplasm. The catalysed reaction is 2 D-alanine + ATP = D-alanyl-D-alanine + ADP + phosphate + H(+). Its pathway is cell wall biogenesis; peptidoglycan biosynthesis. Its function is as follows. Cell wall formation. This chain is D-alanine--D-alanine ligase, found in Buchnera aphidicola subsp. Schizaphis graminum (strain Sg).